We begin with the raw amino-acid sequence, 85 residues long: Small ribosomal subunit protein bS16 (85 aa).

This sequence belongs to the bacterial ribosomal protein bS16 family.

The chain is Small ribosomal subunit protein bS16 from Xanthomonas oryzae pv. oryzae (strain PXO99A).